Consider the following 242-residue polypeptide: Small ribosomal subunit protein uS2 (242 aa).

This sequence belongs to the universal ribosomal protein uS2 family.

In Shewanella pealeana (strain ATCC 700345 / ANG-SQ1), this protein is Small ribosomal subunit protein uS2.